A 116-amino-acid chain; its full sequence is Transcription elongation factor SPT4 homolog 1 (116 aa).

The segment at 19 to 39 adopts a C4-type zinc-finger fold; the sequence is CLRCRLVKTYDQFRDSGCENC.

It belongs to the SPT4 family.

The protein resides in the nucleus. In terms of biological role, may regulate transcription elongation by RNA polymerase II. May enhance transcriptional pausing at sites proximal to the promoter, which may in turn facilitate the assembly of an elongation competent RNA polymerase II complex. The sequence is that of Transcription elongation factor SPT4 homolog 1 from Arabidopsis thaliana (Mouse-ear cress).